The sequence spans 299 residues: Oxygen-dependent coproporphyrinogen-III oxidase (299 aa).

Ser92 contributes to the substrate binding site. His96 and His106 together coordinate a divalent metal cation. Catalysis depends on His106, which acts as the Proton donor. 108–110 contacts substrate; the sequence is NVR. A divalent metal cation contacts are provided by His145 and His175. Residues 240–275 are important for dimerization; it reads YVEFNLVWDRGTLFGLQTGGRTESILMSMPPLVRWE. Position 258-260 (258-260) interacts with substrate; sequence GGR.

This sequence belongs to the aerobic coproporphyrinogen-III oxidase family. Homodimer. A divalent metal cation is required as a cofactor.

It is found in the cytoplasm. The enzyme catalyses coproporphyrinogen III + O2 + 2 H(+) = protoporphyrinogen IX + 2 CO2 + 2 H2O. It functions in the pathway porphyrin-containing compound metabolism; protoporphyrin-IX biosynthesis; protoporphyrinogen-IX from coproporphyrinogen-III (O2 route): step 1/1. Its function is as follows. Involved in the heme biosynthesis. Catalyzes the aerobic oxidative decarboxylation of propionate groups of rings A and B of coproporphyrinogen-III to yield the vinyl groups in protoporphyrinogen-IX. This is Oxygen-dependent coproporphyrinogen-III oxidase from Salmonella heidelberg (strain SL476).